Consider the following 250-residue polypeptide: Envelope glycoprotein L (250 aa).

The N-terminal stretch at 1 to 18 (MELLLFVMSLILLTFSKA) is a signal peptide. One can recognise a gL betaherpesvirus-type domain in the interval 31-239 (KLDDCIAAVI…ETYNSKLPFR (209 aa)). Cysteines 136 and 141 form a disulfide.

This sequence belongs to the herpesviridae glycoprotein L (gL) family. Betaherpesvirinae gL subfamily. Interacts with glycoprotein H (gH); this interaction is necessary for the correct processing and cell surface expression of gH. Part of a gH-gL-gO complex.

The protein resides in the virion membrane. The protein localises to the host cell membrane. Its subcellular location is the host Golgi apparatus. It is found in the host trans-Golgi network. In terms of biological role, the heterodimer glycoprotein H-glycoprotein L is required for the fusion of viral and plasma membranes leading to virus entry into the host cell. Acts as a functional inhibitor of gH and maintains gH in an inhibited form. Upon binding to host integrins, gL dissociates from gH leading to activation of the viral fusion glycoproteins gB and gH. The protein is Envelope glycoprotein L of Human herpesvirus 6A (strain Uganda-1102) (HHV-6 variant A).